The chain runs to 537 residues: Chaperonin GroEL 2 (537 aa).

ATP contacts are provided by residues 29–32 (TLGP), 86–90 (DGTTT), Gly-412, and Asp-495.

Belongs to the chaperonin (HSP60) family. As to quaternary structure, forms a cylinder of 14 subunits composed of two heptameric rings stacked back-to-back. Interacts with the co-chaperonin GroES.

The protein resides in the cytoplasm. The catalysed reaction is ATP + H2O + a folded polypeptide = ADP + phosphate + an unfolded polypeptide.. Together with its co-chaperonin GroES, plays an essential role in assisting protein folding. The GroEL-GroES system forms a nano-cage that allows encapsulation of the non-native substrate proteins and provides a physical environment optimized to promote and accelerate protein folding. In Paenarthrobacter aurescens (strain TC1), this protein is Chaperonin GroEL 2.